The following is a 1330-amino-acid chain: ABC multidrug transporter mdr4 (1330 aa).

N-linked (GlcNAc...) asparagine glycosylation occurs at Asn-3. Helical transmembrane passes span 90–110, 144–164, 218–238, 243–263, 324–344, and 370–390; these read VLLI…FPLL, VLYV…HSTC, KVGL…VAFI, IAGM…GGGH, HAAQ…LAFW, and IFVL…IHVF. The region spanning 94-392 is the ABC transmembrane type-1 1 domain; that stretch reads IGGLLFAICA…VAPFIHVFAS (299 aa). Positions 428–666 constitute an ABC transporter 1 domain; the sequence is IRFRDVHFKY…GGVYAEMVRL (239 aa). 463–470 provides a ligand contact to ATP; that stretch reads GPSGGGKS. N-linked (GlcNAc...) asparagine glycosylation occurs at Asn-707. Residues 717–736 are disordered; the sequence is VADTPSDSRDGSEEEARKKR. Over residues 722–733 the composition is skewed to basic and acidic residues; the sequence is SDSRDGSEEEAR. The next 6 membrane-spanning stretches (helical) occupy residues 761–781, 806–826, 871–893, 903–923, 989–1009, and 1023–1043; these read LLGL…AIVF, LLFF…GCAF, ASAL…VNLI, AWKI…SGMM, AWLA…YWWG, and FFIV…MFAL. Residues 761-1049 enclose the ABC transmembrane type-1 2 domain; the sequence is LLGLAMSVII…MFALAPDISK (289 aa). The ABC transporter 2 domain occupies 1086-1325; it reads AQLRDVHFTY…SETYRTSVIH (240 aa). 1121-1128 is a binding site for ATP; that stretch reads GPSGSGKS.

Belongs to the ABC transporter superfamily. ABCB family. Multidrug resistance exporter (TC 3.A.1.201) subfamily.

The protein resides in the cell membrane. It carries out the reaction itraconazole(in) + ATP + H2O = itraconazole(out) + ADP + phosphate + H(+). It catalyses the reaction voriconazole(in) + ATP + H2O = voriconazole(out) + ADP + phosphate + H(+). Pleiotropic ABC efflux transporter that confers resistance to azoles such as itraconazole and voriconazole. The protein is ABC multidrug transporter mdr4 of Aspergillus fumigatus (strain ATCC MYA-4609 / CBS 101355 / FGSC A1100 / Af293) (Neosartorya fumigata).